A 262-amino-acid polypeptide reads, in one-letter code: UDP-2,3-diacylglucosamine hydrolase (262 aa).

Aspartate 10, histidine 12, aspartate 47, asparagine 86, histidine 121, histidine 218, and histidine 220 together coordinate Mn(2+).

It belongs to the LpxH family. The cofactor is Mn(2+).

Its subcellular location is the cell inner membrane. The protein localises to the cytoplasm. It catalyses the reaction UDP-2-N,3-O-bis[(3R)-3-hydroxytetradecanoyl]-alpha-D-glucosamine + H2O = 2-N,3-O-bis[(3R)-3-hydroxytetradecanoyl]-alpha-D-glucosaminyl 1-phosphate + UMP + 2 H(+). The protein operates within glycolipid biosynthesis; lipid IV(A) biosynthesis; lipid IV(A) from (3R)-3-hydroxytetradecanoyl-[acyl-carrier-protein] and UDP-N-acetyl-alpha-D-glucosamine: step 4/6. Functionally, hydrolyzes the pyrophosphate bond of UDP-2,3-diacylglucosamine to yield 2,3-diacylglucosamine 1-phosphate (lipid X) and UMP by catalyzing the attack of water at the alpha-P atom. Involved in the biosynthesis of lipid A, a phosphorylated glycolipid that anchors the lipopolysaccharide to the outer membrane of the cell. In Porphyromonas gingivalis (strain ATCC BAA-308 / W83), this protein is UDP-2,3-diacylglucosamine hydrolase.